We begin with the raw amino-acid sequence, 139 residues long: Ribonuclease P protein component (139 aa).

Positions 120-139 (KATTGGECTPKSEKCVTAPR) are disordered.

It belongs to the RnpA family. In terms of assembly, consists of a catalytic RNA component (M1 or rnpB) and a protein subunit.

The enzyme catalyses Endonucleolytic cleavage of RNA, removing 5'-extranucleotides from tRNA precursor.. Its function is as follows. RNaseP catalyzes the removal of the 5'-leader sequence from pre-tRNA to produce the mature 5'-terminus. It can also cleave other RNA substrates such as 4.5S RNA. The protein component plays an auxiliary but essential role in vivo by binding to the 5'-leader sequence and broadening the substrate specificity of the ribozyme. This Chlamydia pneumoniae (Chlamydophila pneumoniae) protein is Ribonuclease P protein component.